The primary structure comprises 662 residues: Transcription activator of gluconeogenesis NECHADRAFT_59099 (662 aa).

The segment at 1-61 (MPHEMEENGA…KDPLRPRRKK (61 aa)) is disordered. Basic and acidic residues-rich tracts occupy residues 25-34 (TFLKDDEKMT) and 43-56 (TEVKKKYDPKDPLR). Positions 66-94 (CFACQRAHLTCGDERPCQRCIKRGLADAC) form a DNA-binding region, zn(2)-C6 fungal-type. 3 disordered regions span residues 105-149 (LHDA…TGSN), 502-524 (YSGRSTNGTNTPDHNSQGEMTTP), and 580-606 (YRAPQDPDQKEPGSQKDAQPGILSSRV). Polar residues-rich tracts occupy residues 121-130 (YNPTPTPSRT) and 137-149 (SSQSDNLSATGSN). A PAS domain is found at 448–519 (TLVEYDDFLQ…TNTPDHNSQG (72 aa)). Residues 582–593 (APQDPDQKEPGS) are compositionally biased toward basic and acidic residues.

This sequence belongs to the ERT1/acuK family.

The protein resides in the nucleus. Its function is as follows. Transcription factor which regulates nonfermentable carbon utilization. Activator of gluconeogenetic genes. This is Transcription activator of gluconeogenesis NECHADRAFT_59099 from Fusarium vanettenii (strain ATCC MYA-4622 / CBS 123669 / FGSC 9596 / NRRL 45880 / 77-13-4) (Fusarium solani subsp. pisi).